We begin with the raw amino-acid sequence, 351 residues long: Nuclear inhibitor of protein phosphatase 1 (351 aa).

The interaction with CDC5L, SF3B1 and MELK stretch occupies residues 1–142 (MAAAANSGSS…LPSAVKGDEK (142 aa)). The FHA domain maps to 49–101 (YLFGRNPDLCDFTIDHQSCSRVHAALVYHKHLKRVFLIDLNSTHGTFLGHIRL). An interaction with EED region spans residues 143-224 (MGGEDDELKG…VDPSVGRFRN (82 aa)). Threonine 161 carries the post-translational modification Phosphothreonine; by CK2; in vitro. Serine 178 is modified (phosphoserine; by PKA; in vitro). 2 consecutive short sequence motifs (nuclear localization signal) follow at residues 185–209 (GNLD…DDEI) and 210–240 (INPE…RVEG). The involved in PP-1 inhibition stretch occupies residues 191–200 (RPKRKRKNSR). Position 199 is a phosphoserine (serine 199). Residues 200–203 (RVTF) form an involved in PP-1 binding region. Phosphoserine is present on serine 204. Serine 249 carries the phosphoserine modification. At tyrosine 264 the chain carries Phosphotyrosine. Residues 310-329 (AVNMNPAPNPAVYNPEAVNE) are interaction with EED. Residues 316 to 351 (APNPAVYNPEAVNEPKKKKYAKEAWPGKKPTPSLLI) are disordered. The segment at 330–351 (PKKKKYAKEAWPGKKPTPSLLI) is RNA-binding. The tract at residues 331 to 337 (KKKKYAK) is involved in PP-1 inhibition. Tyrosine 335 carries the post-translational modification Phosphotyrosine.

Interacts with phosphorylated CDC5L, SF3B1 and MELK. Interacts with EED. Part of a complex consisting of PPP1R8, EED, HDAC2 and PP-1. Part of the spliceosome. Interacts with PPP1CA, PPP1CB and PPP1CC. Post-translationally, the N-terminus is blocked. In terms of processing, inactivated by phosphorylation on Ser-199 or Ser-204.

Its subcellular location is the nucleus. The protein localises to the nucleus speckle. Functionally, inhibitor subunit of the major nuclear protein phosphatase-1 (PP-1). It has RNA-binding activity but does not cleave RNA and may target PP-1 to RNA-associated substrates. May also be involved in pre-mRNA splicing. Binds DNA and might act as a transcriptional repressor. Seems to be required for cell proliferation. This Bos taurus (Bovine) protein is Nuclear inhibitor of protein phosphatase 1 (PPP1R8).